Reading from the N-terminus, the 78-residue chain is Acyl carrier protein (78 aa).

A Carrier domain is found at 2 to 77 (STIEERVKKI…AAIDYILSHQ (76 aa)). Serine 37 carries the O-(pantetheine 4'-phosphoryl)serine modification.

Belongs to the acyl carrier protein (ACP) family. Post-translationally, 4'-phosphopantetheine is transferred from CoA to a specific serine of apo-ACP by AcpS. This modification is essential for activity because fatty acids are bound in thioester linkage to the sulfhydryl of the prosthetic group.

It is found in the cytoplasm. It participates in lipid metabolism; fatty acid biosynthesis. Carrier of the growing fatty acid chain in fatty acid biosynthesis. The sequence is that of Acyl carrier protein from Tolumonas auensis (strain DSM 9187 / NBRC 110442 / TA 4).